A 78-amino-acid polypeptide reads, in one-letter code: Large ribosomal subunit protein bL28 (78 aa).

Belongs to the bacterial ribosomal protein bL28 family.

The chain is Large ribosomal subunit protein bL28 from Hydrogenovibrio crunogenus (strain DSM 25203 / XCL-2) (Thiomicrospira crunogena).